A 445-amino-acid chain; its full sequence is Neuropeptide Y receptor type 5 (445 aa).

The Extracellular segment spans residues 1 to 42 (MDLELDEYYNKTLATENNTAATRNSDFPVWDDYKSSVDDLQY). 2 N-linked (GlcNAc...) asparagine glycosylation sites follow: asparagine 10 and asparagine 17. The chain crosses the membrane as a helical span at residues 43 to 63 (FLIGLYTFVSLLGFMGNLLIL). Residues 64–77 (MALMKKRNQKTTVN) are Cytoplasmic-facing. The chain crosses the membrane as a helical span at residues 78-98 (FLIGNLAFSDILVVLFCSPFT). The Extracellular portion of the chain corresponds to 99 to 117 (LTSVLLDQWMFGKVMCHIM). A disulfide bond links cysteine 114 and cysteine 198. The helical transmembrane segment at 118 to 138 (PFLQCVSVLVSTLILISIAIV) threads the bilayer. The Cytoplasmic portion of the chain corresponds to 139-156 (RYHMIKHPISNNLTANHG). Residues 157–177 (YFLIATVWTLGFAICSPLPVF) form a helical membrane-spanning segment. Residues 178 to 208 (HSLVELQETFGSALLSSRYLCVESWPSDSYR) lie on the Extracellular side of the membrane. A helical membrane pass occupies residues 209–229 (IAFTISLLLVQYILPLVCLTV). Topologically, residues 230-369 (SHTSVCRSIS…KKRSRSVFYR (140 aa)) are cytoplasmic. A helical membrane pass occupies residues 370-390 (LTILILVFAVSWMPLHLFHVV). The Extracellular portion of the chain corresponds to 391 to 407 (TDFNDNLISNRHFKLVY). A helical membrane pass occupies residues 408–428 (CICHLLGMMSCCLNPILYGFL). At 429-445 (NNGIKADLVSLIHCLHM) the chain is on the cytoplasmic side. Cysteine 442 is lipidated: S-palmitoyl cysteine.

It belongs to the G-protein coupled receptor 1 family. As to expression, brain; hypothalamus.

Its subcellular location is the cell membrane. In terms of biological role, receptor for neuropeptide Y and peptide YY. The activity of this receptor is mediated by G proteins that inhibit adenylate cyclase activity. Seems to be associated with food intake. Could be involved in feeding disorders. The polypeptide is Neuropeptide Y receptor type 5 (NPY5R) (Homo sapiens (Human)).